A 232-amino-acid polypeptide reads, in one-letter code: Large ribosomal subunit protein uL1 (232 aa).

Belongs to the universal ribosomal protein uL1 family. Part of the 50S ribosomal subunit.

Functionally, binds directly to 23S rRNA. The L1 stalk is quite mobile in the ribosome, and is involved in E site tRNA release. In terms of biological role, protein L1 is also a translational repressor protein, it controls the translation of the L11 operon by binding to its mRNA. This chain is Large ribosomal subunit protein uL1, found in Pelotomaculum thermopropionicum (strain DSM 13744 / JCM 10971 / SI).